Reading from the N-terminus, the 356-residue chain is Phosphoribosylformylglycinamidine cyclo-ligase (356 aa).

This sequence belongs to the AIR synthase family.

The protein resides in the cytoplasm. The catalysed reaction is 2-formamido-N(1)-(5-O-phospho-beta-D-ribosyl)acetamidine + ATP = 5-amino-1-(5-phospho-beta-D-ribosyl)imidazole + ADP + phosphate + H(+). It functions in the pathway purine metabolism; IMP biosynthesis via de novo pathway; 5-amino-1-(5-phospho-D-ribosyl)imidazole from N(2)-formyl-N(1)-(5-phospho-D-ribosyl)glycinamide: step 2/2. The protein is Phosphoribosylformylglycinamidine cyclo-ligase of Acinetobacter baumannii (strain AB307-0294).